The primary structure comprises 270 residues: ATP synthase subunit a (270 aa).

5 helical membrane-spanning segments follow: residues 40–60, 98–118, 143–163, 208–228, and 239–259; these read IDSL…FYAV, IAPL…MDLV, DVNI…YYSI, LFGN…MLPW, and AIFH…LTIV.

This sequence belongs to the ATPase A chain family. F-type ATPases have 2 components, CF(1) - the catalytic core - and CF(0) - the membrane proton channel. CF(1) has five subunits: alpha(3), beta(3), gamma(1), delta(1), epsilon(1). CF(0) has three main subunits: a(1), b(2) and c(9-12). The alpha and beta chains form an alternating ring which encloses part of the gamma chain. CF(1) is attached to CF(0) by a central stalk formed by the gamma and epsilon chains, while a peripheral stalk is formed by the delta and b chains.

It localises to the cell inner membrane. Key component of the proton channel; it plays a direct role in the translocation of protons across the membrane. This chain is ATP synthase subunit a, found in Vibrio vulnificus (strain CMCP6).